Reading from the N-terminus, the 396-residue chain is MRIILFSGKGGVGKTTISAATGYKLSQLGKKVIVVSLDPAHSLADSFDVPEEERRKAKGLPIKINENLEIQEIDIQEEIERYWGEVYRFIELLFHTTGLHEILADELAILPGMEEITSLLYVNKYYREGNHDVLILDLPPTGESIRFVSMPTVMKWYMKKIFKTERLIMKVARPTVGRMTDVPLPDEEYFKALETFYERLKGVDEILINPDITSIRIVSNPEKMVLKESQRAFLYFLLFGVNVDAVIVNKVIPEEVIQQENCSFLEKWLNIQKKYVKEIESYFSPVPVFKVPLLEEEVVGLERLEKLAQLIYGDEPPDKIFHKEIPYKIEQLDGKYVIRIKAPGVKKESISLVKGEDEIVVRVGNFKAHVMLPRKLRNLEPERAKVEKDEILIFMS.

Residue glycine 8–threonine 15 coordinates ATP.

This sequence belongs to the arsA ATPase family.

The catalysed reaction is arsenite(in) + ATP + H2O = arsenite(out) + ADP + phosphate + H(+). Anion-transporting ATPase. Catalyzes the extrusion of arsenite. In Aquifex aeolicus (strain VF5), this protein is Putative arsenical pump-driving ATPase 1 (arsA1).